A 195-amino-acid polypeptide reads, in one-letter code: CASP-like protein 1B1 (195 aa).

At 1–25 the chain is on the cytoplasmic side; the sequence is MDLEKGKKPSEQAAACRIMQVKDKL. The helical transmembrane segment at 26–46 threads the bilayer; it reads ITLQPVVRACVFLATAVAAVI. The Extracellular segment spans residues 47-78; sequence MGLNKQSYTTVVAIVGTRPVTQTFTAKFKDTP. Residues 79-99 traverse the membrane as a helical segment; that stretch reads AFVFFVIANAIASGYNLMVLV. The Cytoplasmic segment spans residues 100-114; it reads TRRILQRRAQSLSVH. The helical transmembrane segment at 115–135 threads the bilayer; sequence LLDMVILTLLATGSATAASMA. Over 136-160 the chain is Extracellular; sequence QLGKNGNLHARWNPICDKFGSFCNH. A helical membrane pass occupies residues 161–181; it reads GGIALMSSFIGVALMLALNLL. Topologically, residues 182–195 are cytoplasmic; the sequence is SAAANSPRSNVTGQ.

This sequence belongs to the Casparian strip membrane proteins (CASP) family. Homodimer and heterodimers.

The protein localises to the cell membrane. In Oryza sativa subsp. indica (Rice), this protein is CASP-like protein 1B1.